The chain runs to 554 residues: Glutamine--tRNA ligase (554 aa).

Residues 33–43 (PEPNGYLHIGH) carry the 'HIGH' region motif. Residues 34 to 36 (EPN) and 40 to 46 (HIGHAKS) contribute to the ATP site. Asp-66 and Tyr-210 together coordinate L-glutamine. Residues Thr-229, 259–260 (RL), and 267–269 (MSK) each bind ATP. The 'KMSKS' region signature appears at 266–270 (VMSKR).

The protein belongs to the class-I aminoacyl-tRNA synthetase family. In terms of assembly, monomer.

It localises to the cytoplasm. The catalysed reaction is tRNA(Gln) + L-glutamine + ATP = L-glutaminyl-tRNA(Gln) + AMP + diphosphate. This Clostridioides difficile (strain 630) (Peptoclostridium difficile) protein is Glutamine--tRNA ligase.